The chain runs to 180 residues: Required for excision 1-B domain-containing protein (180 aa).

The disordered stretch occupies residues 1 to 23; it reads MITAEAASESTVPAVPGDTAATG.

In Bos taurus (Bovine), this protein is Required for excision 1-B domain-containing protein.